Reading from the N-terminus, the 323-residue chain is tRNA dimethylallyltransferase (323 aa).

12–19 (GPTAAGKT) contributes to the ATP binding site. A substrate-binding site is contributed by 14 to 19 (TAAGKT). Interaction with substrate tRNA stretches follow at residues 37 to 40 (DSAL) and 161 to 165 (QRLMR).

Belongs to the IPP transferase family. Monomer. Requires Mg(2+) as cofactor.

The enzyme catalyses adenosine(37) in tRNA + dimethylallyl diphosphate = N(6)-dimethylallyladenosine(37) in tRNA + diphosphate. Functionally, catalyzes the transfer of a dimethylallyl group onto the adenine at position 37 in tRNAs that read codons beginning with uridine, leading to the formation of N6-(dimethylallyl)adenosine (i(6)A). The protein is tRNA dimethylallyltransferase of Pseudomonas aeruginosa (strain UCBPP-PA14).